Consider the following 328-residue polypeptide: GMP reductase (328 aa).

Cys-174 acts as the Thioimidate intermediate in catalysis. Position 203 to 226 (203 to 226 (IIADGGIRTHGDIAKSIRFGASMV)) interacts with NADP(+).

Belongs to the IMPDH/GMPR family. GuaC type 2 subfamily.

The enzyme catalyses IMP + NH4(+) + NADP(+) = GMP + NADPH + 2 H(+). In terms of biological role, catalyzes the irreversible NADPH-dependent deamination of GMP to IMP. It functions in the conversion of nucleobase, nucleoside and nucleotide derivatives of G to A nucleotides, and in maintaining the intracellular balance of A and G nucleotides. The polypeptide is GMP reductase (Staphylococcus saprophyticus subsp. saprophyticus (strain ATCC 15305 / DSM 20229 / NCIMB 8711 / NCTC 7292 / S-41)).